A 266-amino-acid polypeptide reads, in one-letter code: Indole-3-glycerol phosphate synthase (266 aa).

The protein belongs to the TrpC family.

The catalysed reaction is 1-(2-carboxyphenylamino)-1-deoxy-D-ribulose 5-phosphate + H(+) = (1S,2R)-1-C-(indol-3-yl)glycerol 3-phosphate + CO2 + H2O. It participates in amino-acid biosynthesis; L-tryptophan biosynthesis; L-tryptophan from chorismate: step 4/5. This chain is Indole-3-glycerol phosphate synthase, found in Herminiimonas arsenicoxydans.